The primary structure comprises 306 residues: Protease HtpX homolog (306 aa).

2 consecutive transmembrane segments (helical) span residues 10–30 (TTLL…ATGG) and 33–53 (QTLS…YWFS). H135 is a Zn(2+) binding site. Residue E136 is part of the active site. Position 139 (H139) interacts with Zn(2+). 2 consecutive transmembrane segments (helical) span residues 149 to 169 (AIAS…MYFG) and 181 to 201 (GLGL…ASLI). Residue E210 coordinates Zn(2+).

Belongs to the peptidase M48B family. Zn(2+) is required as a cofactor.

The protein localises to the cell membrane. In Bifidobacterium longum (strain NCC 2705), this protein is Protease HtpX homolog.